The following is a 301-amino-acid chain: Glutamine amidotransferase-like protein GlxB (301 aa).

Cys2 is a catalytic residue. Residues 2-298 (CGIVGLFLKD…PATVYFWDHQ (297 aa)) form the Glutamine amidotransferase type-2 domain.

This Rhizobium meliloti (strain 1021) (Ensifer meliloti) protein is Glutamine amidotransferase-like protein GlxB (glxB).